Reading from the N-terminus, the 141-residue chain is Large ribosomal subunit protein uL11 (141 aa).

This sequence belongs to the universal ribosomal protein uL11 family. As to quaternary structure, part of the ribosomal stalk of the 50S ribosomal subunit. Interacts with L10 and the large rRNA to form the base of the stalk. L10 forms an elongated spine to which L12 dimers bind in a sequential fashion forming a multimeric L10(L12)X complex. Post-translationally, one or more lysine residues are methylated.

Functionally, forms part of the ribosomal stalk which helps the ribosome interact with GTP-bound translation factors. The chain is Large ribosomal subunit protein uL11 from Clostridioides difficile (strain 630) (Peptoclostridium difficile).